The following is a 105-amino-acid chain: Ribosomal silencing factor RsfS (105 aa).

The protein belongs to the Iojap/RsfS family. As to quaternary structure, interacts with ribosomal protein uL14 (rplN).

The protein localises to the cytoplasm. Its function is as follows. Functions as a ribosomal silencing factor. Interacts with ribosomal protein uL14 (rplN), blocking formation of intersubunit bridge B8. Prevents association of the 30S and 50S ribosomal subunits and the formation of functional ribosomes, thus repressing translation. In Escherichia coli O6:H1 (strain CFT073 / ATCC 700928 / UPEC), this protein is Ribosomal silencing factor RsfS.